The chain runs to 205 residues: Tic20 family protein Ycf60 (205 aa).

5 helical membrane passes run 5–25 (LFVN…VILI), 54–74 (AISC…FGIV), 102–122 (LIGF…IIQI), 130–150 (IVQA…LTSL), and 163–183 (LADT…TDAL).

This sequence belongs to the Tic20 family.

Its subcellular location is the plastid. It localises to the chloroplast membrane. The protein is Tic20 family protein Ycf60 (ycf60) of Cyanidium caldarium (Red alga).